The sequence spans 369 residues: Outer membrane porin F (369 aa).

Residues 1–21 (MKRNILAVVIPALLVAGTANA) form the signal peptide. The chain crosses the membrane as a beta stranded span at residues 22–27 (AEIFNK). Aspartate 28 is a topological domain (periplasmic). The chain crosses the membrane as a beta stranded span at residues 29–44 (GNKLDLYGKVDVRHQF). The Extracellular segment spans residues 45–55 (ADKRSSEDGDD). The chain crosses the membrane as a beta stranded span at residues 56–68 (SYARIGIKGETQI). Residues 69–70 (SD) are Periplasmic-facing. A beta stranded transmembrane segment spans residues 71–83 (QLTGFGRWEYNVK). The Extracellular portion of the chain corresponds to 84-97 (AKGTEAAVAESSTR). Residues 98 to 106 (LAFAGLKFA) form a beta stranded membrane-spanning segment. Topologically, residues 107 to 108 (NY) are periplasmic. The beta stranded transmembrane segment at 109–115 (GSLDYGR) threads the bilayer. Residues 116–150 (NYGVNYDVNAWTDVLPIFGGDAMAQTDNFMTGRST) lie on the Extracellular side of the membrane. Residues 151–157 (GLLTYRN) form a beta stranded membrane-spanning segment. Residues 158–165 (TDFFGLVD) are Periplasmic-facing. A beta stranded transmembrane segment spans residues 166-177 (GLNFALQYQGQN). Residues 178 to 193 (SDRTKNKGRDTERSNG) are Extracellular-facing. The chain crosses the membrane as a beta stranded span at residues 194–204 (DGYGLSSTYDV). Residues 205 to 206 (GY) are Periplasmic-facing. A beta stranded transmembrane segment spans residues 207–219 (GITVGGSYANSAR). The Extracellular segment spans residues 220-234 (TADQKEKVSDAYGKR). Residues 235 to 246 (AEAWNIGAKYDA) traverse the membrane as a beta stranded segment. Position 247 (asparagine 247) is a topological domain, periplasmic. A beta stranded transmembrane segment spans residues 248-259 (NVYLAAMYGETR). At 260–278 (NMTRYTRTIADTDATLIAN) the chain is on the extracellular side. Residues 279–291 (KTQNIELTAQYLF) traverse the membrane as a beta stranded segment. Residues 292-294 (SDL) lie on the Periplasmic side of the membrane. Residues 295–308 (GLKPSLAYVQSKGK) form a beta stranded membrane-spanning segment. The Extracellular portion of the chain corresponds to 309-320 (DLTEGKGFNGDL). A beta stranded transmembrane segment spans residues 321 to 332 (VKYVSVGTYYYF). Residues 333–334 (NK) are Periplasmic-facing. Residues 335–344 (NLSTYVDYKI) form a beta stranded membrane-spanning segment. Topologically, residues 345-359 (NLLKKDNELGVNARN) are extracellular. A beta stranded transmembrane segment spans residues 360-369 (VFGVGLTYQF).

Belongs to the Gram-negative porin family. As to quaternary structure, homotrimer.

Its subcellular location is the cell outer membrane. Its function is as follows. Forms pores that allow passive diffusion of small molecules across the outer membrane. In Xenorhabdus nematophila (strain ATCC 19061 / DSM 3370 / CCUG 14189 / LMG 1036 / NCIMB 9965 / AN6), this protein is Outer membrane porin F (ompF).